Here is a 386-residue protein sequence, read N- to C-terminus: MNISTWSTLVTPESCHRLAASGHSLLIVLHYNHSGRLASRGGSEDGGGLGMLRGPSVAAGCLVVLENAMVLAAIAIYMRSRRWVYYCLLNITLSDLLTGLAYVVNVLLSGTRTFQLSPVHWFLREGLLFMALAASTFSLLFTAGERFATMVRVAESGATKTSRVYGCIGLCWLLAAILGLLPLLGWNCVCAFPRCSSLLPLYSKGYVLFCVVVFALILVAILSLYGAIFRVVRANGQKSPRPPARRKSRRLLNTVLMILVAFVVCWGPLFGLLLADIFGSNVWAQEYLRGMDWILALAVFNSAINPLIYSFRSREVQRAVLAFLCCGCLWLGLRGPGDCLTRITEAHSGASTTDSSLRPRDSFRTSRSLSFRMREPLSSISSVRST.

Residues 1–56 (MNISTWSTLVTPESCHRLAASGHSLLIVLHYNHSGRLASRGGSEDGGGLGMLRGPS) lie on the Extracellular side of the membrane. N-linked (GlcNAc...) asparagine glycosylation is found at Asn2 and Asn32. The chain crosses the membrane as a helical span at residues 57–77 (VAAGCLVVLENAMVLAAIAIY). At 78 to 87 (MRSRRWVYYC) the chain is on the cytoplasmic side. A helical membrane pass occupies residues 88 to 108 (LLNITLSDLLTGLAYVVNVLL). The Extracellular portion of the chain corresponds to 109–120 (SGTRTFQLSPVH). A helical transmembrane segment spans residues 121–141 (WFLREGLLFMALAASTFSLLF). Topologically, residues 142–163 (TAGERFATMVRVAESGATKTSR) are cytoplasmic. Residues 164–184 (VYGCIGLCWLLAAILGLLPLL) form a helical membrane-spanning segment. The Extracellular portion of the chain corresponds to 185–208 (GWNCVCAFPRCSSLLPLYSKGYVL). Residues 209–229 (FCVVVFALILVAILSLYGAIF) traverse the membrane as a helical segment. The Cytoplasmic segment spans residues 230–254 (RVVRANGQKSPRPPARRKSRRLLNT). A helical transmembrane segment spans residues 255 to 275 (VLMILVAFVVCWGPLFGLLLA). The Extracellular segment spans residues 276-290 (DIFGSNVWAQEYLRG). Residues 291-311 (MDWILALAVFNSAINPLIYSF) form a helical membrane-spanning segment. Topologically, residues 312 to 386 (RSREVQRAVL…LSSISSVRST (75 aa)) are cytoplasmic. Cys325 is lipidated: S-palmitoyl cysteine.

This sequence belongs to the G-protein coupled receptor 1 family. In terms of tissue distribution, specifically expressed in fetal and adult lymphoid and hematopoietic tissue. Expressed in lung, spleen, thymus and lymph node but absent in other non-lymphatic tissue. Coexpressed with GNA15 at the same relative levels in all tissues examined, with the highest levels in adult spleen and lung.

The protein localises to the cell membrane. Receptor for the lysosphingolipid sphingosine 1-phosphate (S1P). S1P is a bioactive lysophospholipid that elicits diverse physiological effect on most types of cells and tissues. May be involved in cell migration processes that are specific for lymphocytes. This Mus musculus (Mouse) protein is Sphingosine 1-phosphate receptor 4 (S1pr4).